The sequence spans 406 residues: Putative permease Rv2963 (406 aa).

The next 9 helical transmembrane spans lie at 30 to 50, 67 to 87, 111 to 131, 132 to 152, 208 to 228, 246 to 266, 278 to 298, 312 to 332, and 361 to 381; these read WEIL…QAVV, LVIA…AVAL, LVVE…TAAE, FVGG…FVGA, LAIL…AAWV, AVWG…CSIG, GISF…LPIL, VLLG…ELLF, and VIFL…GGLP.

The protein belongs to the UPF0718 family.

The protein resides in the cell membrane. This chain is Putative permease Rv2963, found in Mycobacterium tuberculosis (strain ATCC 25618 / H37Rv).